We begin with the raw amino-acid sequence, 178 residues long: Bifunctional protein PyrR (178 aa).

The PRPP-binding signature appears at 99–111; that stretch reads VIIVDDVLYTCRT.

It belongs to the purine/pyrimidine phosphoribosyltransferase family. PyrR subfamily. Homodimer and homohexamer; in equilibrium.

It carries out the reaction UMP + diphosphate = 5-phospho-alpha-D-ribose 1-diphosphate + uracil. In terms of biological role, regulates transcriptional attenuation of the pyrimidine nucleotide (pyr) operon by binding in a uridine-dependent manner to specific sites on pyr mRNA. This disrupts an antiterminator hairpin in the RNA and favors formation of a downstream transcription terminator, leading to a reduced expression of downstream genes. Functionally, also displays a weak uracil phosphoribosyltransferase activity which is not physiologically significant. In Clostridium perfringens (strain ATCC 13124 / DSM 756 / JCM 1290 / NCIMB 6125 / NCTC 8237 / Type A), this protein is Bifunctional protein PyrR.